A 216-amino-acid polypeptide reads, in one-letter code: Nudix hydrolase 26, chloroplastic (216 aa).

The N-terminal 53 residues, 1–53 (MALYRPLLLHHPTSPSVTTFLRNYPSKPIKFSSLPFLHRCRKSRVSSSSARCC), are a transit peptide targeting the chloroplast. The Nudix hydrolase domain maps to 62-209 (GYRRNVGVCL…KKPVYKEVMS (148 aa)). The short motif at 95–116 (GGIDEGEDPRVAVMRELKEETG) is the Nudix box element. Mn(2+)-binding residues include Glu110 and Glu114.

This sequence belongs to the Nudix hydrolase family. The cofactor is Mg(2+). Mn(2+) serves as cofactor. In terms of tissue distribution, expressed in roots, leaves, stems and inflorescences.

It localises to the plastid. Its subcellular location is the chloroplast. Functionally, mediates the hydrolysis of some nucleoside diphosphate derivatives. Can use diadenosine 5',5'''-P(1)P(5) pentaphosphate (Ap(5)A), diadenosine 5',5'''-P(1)P(4) tetraphosphate (Ap(4)A) and diadenosine 5',5'''-P(1)P(3) triphosphate (Ap(3)A) as substrates. The sequence is that of Nudix hydrolase 26, chloroplastic (NUDT26) from Arabidopsis thaliana (Mouse-ear cress).